The chain runs to 1073 residues: Probable cellulose synthase A catalytic subunit 2 [UDP-forming] (1073 aa).

Residues 1-270 (MDGAKSGKQC…SSSRINPYRM (270 aa)) are Cytoplasmic-facing. Residues Cys-13, Cys-16, Cys-32, Cys-35, Cys-40, Cys-43, Cys-55, and Cys-58 each contribute to the Zn(2+) site. The RING-type; degenerate zinc-finger motif lies at 13-59 (CQICGDGVGTAADGELFTACDVCGFPVCRPCYEYERKDGSQACPQCK). Residues 66–98 (KGSPPILGDESDDVDADDASDVNYPTSGNQDHK) are disordered. Residues 74 to 85 (DESDDVDADDAS) show a composition bias toward acidic residues. Residues 271–291 (VIVLRLIVLCIFLHYRITNPV) form a helical membrane-spanning segment. Residues 292–293 (RN) are Extracellular-facing. The helical transmembrane segment at 294 to 314 (AYPLWLLSVICEIWFALSWIL) threads the bilayer. Topologically, residues 315–856 (DQFPKWSPIN…INTTIYPLTS (542 aa)) are cytoplasmic. Residues Ser-353, Lys-359, Glu-360, and Asp-389 each coordinate UDP-alpha-D-glucose. The active site involves Asp-389. Positions 443–470 (VKDRRAMKREYEEFKVRVNALVAKAQKV) form a coiled coil. Lys-530 contributes to the UDP-alpha-D-glucose binding site. Lys-531 and Asp-555 together coordinate Mn(2+). A disordered region spans residues 655–676 (GGRKKTKKSKEKSTEKKKSHKH). Residue Asp-773 is part of the active site. Residues 857–877 (IPLLLYCILPAICLLTGKFII) form a helical membrane-spanning segment. The Extracellular portion of the chain corresponds to 878-882 (PEISN). Residues 883 to 903 (FASIWFISLFLSIFATGILEM) traverse the membrane as a helical segment. Residues 904-918 (RWSGVGIDEWWRNEQ) are Cytoplasmic-facing. The helical transmembrane segment at 919–939 (FWVIGGISAHLFAVFQGLLKV) threads the bilayer. Topologically, residues 940-969 (LAGIDTSFTVTSKASDEEGDFAELYMFKWT) are extracellular. The chain crosses the membrane as a helical span at residues 970–990 (TLLIPPTTILIINLVGVVAGI). Residues 991 to 1001 (SYAINSGYQSW) lie on the Cytoplasmic side of the membrane. Residues 1002–1022 (GPLFGKLFFAFWVIVHLYPFL) form a helical membrane-spanning segment. The Extracellular segment spans residues 1023-1031 (KGLMGRQNR). Residues 1032-1052 (TPTIVVVWAILLASIFSLLWV) form a helical membrane-spanning segment. Topologically, residues 1053–1073 (RIDPFTTRVTGPDTQKCGINC) are cytoplasmic.

The protein belongs to the glycosyltransferase 2 family. Plant cellulose synthase subfamily. Mn(2+) serves as cofactor. The cofactor is Zn(2+).

It localises to the cell membrane. It carries out the reaction [(1-&gt;4)-beta-D-glucosyl](n) + UDP-alpha-D-glucose = [(1-&gt;4)-beta-D-glucosyl](n+1) + UDP + H(+). Its pathway is glycan metabolism; plant cellulose biosynthesis. Functionally, probable catalytic subunit of cellulose synthase terminal complexes ('rosettes'), required for beta-1,4-glucan microfibril crystallization, a major mechanism of the cell wall formation. The protein is Probable cellulose synthase A catalytic subunit 2 [UDP-forming] (CESA2) of Oryza sativa subsp. japonica (Rice).